Consider the following 523-residue polypeptide: Glucose-1-phosphate adenylyltransferase large subunit 1, chloroplastic/amyloplastic (523 aa).

The N-terminal 49 residues, 1–49, are a transit peptide targeting the chloroplast; sequence MSSMQFSSVLPLEGKACVSPVRREGSACERLKIGDSSSIRHERASRRMC.

This sequence belongs to the bacterial/plant glucose-1-phosphate adenylyltransferase family. In terms of assembly, heterotetramer. Starchy endosperm and roots.

It localises to the plastid. The protein resides in the chloroplast. Its subcellular location is the amyloplast. The enzyme catalyses alpha-D-glucose 1-phosphate + ATP + H(+) = ADP-alpha-D-glucose + diphosphate. It functions in the pathway glycan biosynthesis; starch biosynthesis. Highly active without 3'phosphoglycerate, and is only slightly affected by the activator 3'phosphoglycerate and inhibitor orthophosphate. In terms of biological role, this protein plays a role in synthesis of starch. It catalyzes the synthesis of the activated glycosyl donor, ADP-glucose from Glc-1-P and ATP. The protein is Glucose-1-phosphate adenylyltransferase large subunit 1, chloroplastic/amyloplastic of Hordeum vulgare (Barley).